A 107-amino-acid polypeptide reads, in one-letter code: MAGRSGDSDEALLQAVRIIKILYQSNPYPKPEGTRQARRNRRRRWRARQRQIHSISERILSTCVGRPAEPVPFQLPPIERLNINCSESGGTSGTQQPQGNTERVGNP.

A phosphoserine; by host CK2 mark is found at Ser5 and Ser8. Positions 18 to 26 are homomultimerization; the sequence is IIKILYQSN. Disordered regions lie at residues 26 to 50 and 82 to 107; these read NPYPKPEGTRQARRNRRRRWRARQR and NINCSESGGTSGTQQPQGNTERVGNP. Positions 34-50 match the Nuclear localization signal and RNA-binding (RRE) motif; that stretch reads TRQARRNRRRRWRARQR. Over residues 36-50 the composition is skewed to basic residues; the sequence is QARRNRRRRWRARQR. Residues 73–84 carry the Nuclear export signal and binding to XPO1 motif; it reads FQLPPIERLNIN. The span at 86–101 shows a compositional bias: low complexity; it reads SESGGTSGTQQPQGNT. Ser92 bears the Phosphoserine; by host mark.

Belongs to the HIV-1 REV protein family. As to quaternary structure, homomultimer; when bound to the RRE. Multimeric assembly is essential for activity and may involve XPO1. Binds to human KPNB1, XPO1, TNPO1, RANBP5 and IPO7. Interacts with the viral Integrase. Interacts with human KHDRBS1. Interacts with human NAP1; this interaction decreases Rev multimerization and stimulates its activity. Interacts with human DEAD-box helicases DDX3 and DDX24; these interactions may serve for viral RNA export to the cytoplasm and packaging, respectively. Interacts with human PSIP1; this interaction may inhibit HIV-1 DNA integration by promoting dissociation of the Integrase-LEDGF/p75 complex. Asymmetrically arginine dimethylated at one site by host PRMT6. Methylation impairs the RNA-binding activity and export of viral RNA from the nucleus to the cytoplasm. Post-translationally, phosphorylated by protein kinase CK2. Presence of, and maybe binding to the N-terminus of the regulatory beta subunit of CK2 is necessary for CK2-mediated Rev's phosphorylation.

Its subcellular location is the host nucleus. The protein localises to the host nucleolus. It localises to the host cytoplasm. In terms of biological role, escorts unspliced or incompletely spliced viral pre-mRNAs (late transcripts) out of the nucleus of infected cells. These pre-mRNAs carry a recognition sequence called Rev responsive element (RRE) located in the env gene, that is not present in fully spliced viral mRNAs (early transcripts). This function is essential since most viral proteins are translated from unspliced or partially spliced pre-mRNAs which cannot exit the nucleus by the pathway used by fully processed cellular mRNAs. Rev itself is translated from a fully spliced mRNA that readily exits the nucleus. Rev's nuclear localization signal (NLS) binds directly to KPNB1/Importin beta-1 without previous binding to KPNA1/Importin alpha-1. KPNB1 binds to the GDP bound form of RAN (Ran-GDP) and targets Rev to the nucleus. In the nucleus, the conversion from Ran-GDP to Ran-GTP dissociates Rev from KPNB1 and allows Rev's binding to the RRE in viral pre-mRNAs. Rev multimerization on the RRE via cooperative assembly exposes its nuclear export signal (NES) to the surface. Rev can then form a complex with XPO1/CRM1 and Ran-GTP, leading to nuclear export of the complex. Conversion from Ran-GTP to Ran-GDP mediates dissociation of the Rev/RRE/XPO1/RAN complex, so that Rev can return to the nucleus for a subsequent round of export. Beside KPNB1, also seems to interact with TNPO1/Transportin-1, RANBP5/IPO5 and IPO7/RANBP7 for nuclear import. The nucleoporin-like HRB/RIP is an essential cofactor that probably indirectly interacts with Rev to release HIV RNAs from the perinuclear region to the cytoplasm. The protein is Protein Rev of Human immunodeficiency virus type 1 group M subtype C (isolate 92BR025) (HIV-1).